The following is a 473-amino-acid chain: Siroheme synthase (473 aa).

A precorrin-2 dehydrogenase /sirohydrochlorin ferrochelatase region spans residues 1–203; the sequence is MQYLPIFTKL…GDTQAAEQQL (203 aa). Residues 22-23 and 43-44 contribute to the NAD(+) site; these read DV and PK. Phosphoserine is present on Ser128. A uroporphyrinogen-III C-methyltransferase region spans residues 215 to 473; that stretch reads GEVYVVGAGP…SFAQPLTDVA (259 aa). Pro224 is an S-adenosyl-L-methionine binding site. The active-site Proton acceptor is Asp247. Residue Lys269 is the Proton donor of the active site. Residues 300–302, Ile305, 330–331, Met382, and Gly411 contribute to the S-adenosyl-L-methionine site; these read GGD and TA.

The protein in the N-terminal section; belongs to the precorrin-2 dehydrogenase / sirohydrochlorin ferrochelatase family. It in the C-terminal section; belongs to the precorrin methyltransferase family.

It carries out the reaction uroporphyrinogen III + 2 S-adenosyl-L-methionine = precorrin-2 + 2 S-adenosyl-L-homocysteine + H(+). The catalysed reaction is precorrin-2 + NAD(+) = sirohydrochlorin + NADH + 2 H(+). The enzyme catalyses siroheme + 2 H(+) = sirohydrochlorin + Fe(2+). It functions in the pathway cofactor biosynthesis; adenosylcobalamin biosynthesis; precorrin-2 from uroporphyrinogen III: step 1/1. The protein operates within cofactor biosynthesis; adenosylcobalamin biosynthesis; sirohydrochlorin from precorrin-2: step 1/1. Its pathway is porphyrin-containing compound metabolism; siroheme biosynthesis; precorrin-2 from uroporphyrinogen III: step 1/1. It participates in porphyrin-containing compound metabolism; siroheme biosynthesis; siroheme from sirohydrochlorin: step 1/1. It functions in the pathway porphyrin-containing compound metabolism; siroheme biosynthesis; sirohydrochlorin from precorrin-2: step 1/1. Its function is as follows. Multifunctional enzyme that catalyzes the SAM-dependent methylations of uroporphyrinogen III at position C-2 and C-7 to form precorrin-2 via precorrin-1. Then it catalyzes the NAD-dependent ring dehydrogenation of precorrin-2 to yield sirohydrochlorin. Finally, it catalyzes the ferrochelation of sirohydrochlorin to yield siroheme. The protein is Siroheme synthase of Pseudoalteromonas translucida (strain TAC 125).